We begin with the raw amino-acid sequence, 307 residues long: Phosphoribosylaminoimidazole-succinocarboxamide synthase (307 aa).

It belongs to the SAICAR synthetase family.

The catalysed reaction is 5-amino-1-(5-phospho-D-ribosyl)imidazole-4-carboxylate + L-aspartate + ATP = (2S)-2-[5-amino-1-(5-phospho-beta-D-ribosyl)imidazole-4-carboxamido]succinate + ADP + phosphate + 2 H(+). Its pathway is purine metabolism; IMP biosynthesis via de novo pathway; 5-amino-1-(5-phospho-D-ribosyl)imidazole-4-carboxamide from 5-amino-1-(5-phospho-D-ribosyl)imidazole-4-carboxylate: step 1/2. This Thermobifida fusca (strain YX) protein is Phosphoribosylaminoimidazole-succinocarboxamide synthase.